The primary structure comprises 126 residues: uncharacterized protein (126 aa).

This is an uncharacterized protein from Escherichia coli (Bacteriophage T4).